A 118-amino-acid chain; its full sequence is uncharacterized protein (118 aa).

A disordered region spans residues 1–118 (MASARGAKQS…AARQNEKTAR (118 aa)). Low complexity predominate over residues 13–28 (RVGTTRYTETSTVRVE). Residues 29–49 (TSSHRVETSSRRVETSQRRSE) show a composition bias toward basic and acidic residues.

This is an uncharacterized protein from Homo sapiens (Human).